The chain runs to 1447 residues: Baculoviral IAP repeat-containing protein 1b (1447 aa).

BIR repeat units follow at residues 60–127 (EAKR…CEFL), 159–227 (EEAR…CEFL), and 278–345 (EELR…CVFL). Zn(2+) is bound by residues cysteine 315, cysteine 318, histidine 335, and cysteine 342. Residues 508-802 (SVMCVEGEAG…EFLAAVRLTE (295 aa)) form the NACHT domain. Position 520 (lysine 520) interacts with ATP.

As to quaternary structure, component of the NLRC4 inflammasome, at least composed of NLRC4, caspase-1 (CASP1) and some NAIP protein. Interacts with S.typhimurium (Salmonella) PrgJ and B.thailandensis BsaK.

In terms of biological role, sensor component of the NLRC4 inflammasome that specifically recognizes and binds type III secretion system (T3SS) rod proteins such as S.typhimurium (Salmonella) PrgJ and B.thailandensis BsaK from pathogenic bacteria. Association of pathogenic bacteria proteins drives in turn drive assembly and activation of the NLRC4 inflammasome, promoting caspase-1 activation, cytokine production and macrophage pyroptosis. The NLRC4 inflammasome is activated as part of the innate immune response to a range of intracellular bacteria. The NLRC4 inflammasome senses Gram-negative bacteria such as L.pneumophila and P.aeruginosa, enteric pathogens S.typhimurium (Salmonella) and S.flexneri. Prevents motor-neuron apoptosis induced by a variety of signals. The sequence is that of Baculoviral IAP repeat-containing protein 1b (Naip2) from Mus musculus (Mouse).